Here is a 186-residue protein sequence, read N- to C-terminus: Elongation factor P (186 aa).

Belongs to the elongation factor P family.

Its subcellular location is the cytoplasm. It participates in protein biosynthesis; polypeptide chain elongation. Its function is as follows. Involved in peptide bond synthesis. Stimulates efficient translation and peptide-bond synthesis on native or reconstituted 70S ribosomes in vitro. Probably functions indirectly by altering the affinity of the ribosome for aminoacyl-tRNA, thus increasing their reactivity as acceptors for peptidyl transferase. The protein is Elongation factor P of Neisseria gonorrhoeae (strain NCCP11945).